Here is a 61-residue protein sequence, read N- to C-terminus: Small ribosomal subunit protein uS14 (61 aa).

Zn(2+)-binding residues include cysteine 24, cysteine 27, cysteine 40, and cysteine 43.

Belongs to the universal ribosomal protein uS14 family. Zinc-binding uS14 subfamily. Part of the 30S ribosomal subunit. Contacts proteins S3 and S10. The cofactor is Zn(2+).

Its function is as follows. Binds 16S rRNA, required for the assembly of 30S particles and may also be responsible for determining the conformation of the 16S rRNA at the A site. The protein is Small ribosomal subunit protein uS14 of Maridesulfovibrio salexigens (strain ATCC 14822 / DSM 2638 / NCIMB 8403 / VKM B-1763) (Desulfovibrio salexigens).